The sequence spans 321 residues: Olfactory receptor 5P60 (321 aa).

Topologically, residues 1-28 are extracellular; it reads MAFLHNGNHTAVTEFILLGLTDDPVLRI. N-linked (GlcNAc...) asparagine glycosylation occurs at Asn-8. The helical transmembrane segment at 29–49 threads the bilayer; it reads VLFTIILCIYLVTVSGNLSTI. The Cytoplasmic segment spans residues 50–57; sequence LLIRVSSQ. A helical membrane pass occupies residues 58–78; that stretch reads LHHPMYFFLSHLASADIGYSS. Residues 79-102 lie on the Extracellular side of the membrane; the sequence is SVTPNMLVNFLVKQNTISYIGCSI. Cys-100 and Cys-192 are disulfide-bonded. The chain crosses the membrane as a helical span at residues 103 to 123; sequence QFGSAAFFGGLECFLLAVMAY. The Cytoplasmic segment spans residues 124-136; sequence DRFVAICNPLLYS. Residues 137-157 traverse the membrane as a helical segment; the sequence is TKMSTQVCVQLVVGSYIGGFL. The Extracellular segment spans residues 158–199; sequence NASFATVSFLFLFFCGPNIINHFFCDFAPLIELSCSDVRISV. The helical transmembrane segment at 200 to 220 threads the bilayer; that stretch reads LVTSFSAGTVTMLTVLVIAIS. The Cytoplasmic segment spans residues 221 to 240; that stretch reads YTYILITILKMRSTEGRHKA. A helical transmembrane segment spans residues 241–261; sequence FSTCTSHLTAVSLFYGTITFI. Topologically, residues 262–274 are extracellular; that stretch reads YVMPKSRYSTDQN. The chain crosses the membrane as a helical span at residues 275-295; the sequence is KVVSVFYMVVIPMLNPLIYSL. The Cytoplasmic portion of the chain corresponds to 296–321; it reads RNNEIKGALRRHLGKKIFSQSNILFY.

The protein belongs to the G-protein coupled receptor 1 family.

It localises to the cell membrane. Potential odorant receptor. The sequence is that of Olfactory receptor 5P60 from Mus musculus (Mouse).